The primary structure comprises 317 residues: Uridine phosphorylase 2 (317 aa).

Phosphate contacts are provided by residues glycine 66, arginine 100, and arginine 144–threonine 147. The cysteines at positions 95 and 102 are disulfide-linked. Uridine-binding positions include serine 148 to glycine 149 and glutamine 223 to arginine 225.

This sequence belongs to the PNP/UDP phosphorylase family. As to quaternary structure, homodimer. In terms of tissue distribution, predominantly expressed in kidney.

The catalysed reaction is uridine + phosphate = alpha-D-ribose 1-phosphate + uracil. It carries out the reaction 2'-deoxyuridine + phosphate = 2-deoxy-alpha-D-ribose 1-phosphate + uracil. Its pathway is pyrimidine metabolism; UMP biosynthesis via salvage pathway; uracil from uridine (phosphorylase route): step 1/1. A conditional disulfide bridge can form within the protein that dislocates a critical phosphate-coordinating arginine Arg-100 away from the active site, disabling the enzyme. In terms of biological role, catalyzes the reversible phosphorylytic cleavage of uridine to uracil and ribose-1-phosphate which can then be utilized as carbon and energy sources or in the rescue of pyrimidine bases for nucleotide synthesis. Shows broad substrate specificity and can also accept deoxyuridine and other analogous compounds. This chain is Uridine phosphorylase 2, found in Homo sapiens (Human).